The sequence spans 185 residues: Putative sulfur carrier protein YrkF (185 aa).

Residue Cys15 is the Cysteine persulfide intermediate of the active site. The 85-residue stretch at 101-185 folds into the Rhodanese domain; that stretch reads SDESLNILDV…GMRDWTGKTE (85 aa).

This sequence belongs to the sulfur carrier protein TusA family.

This Bacillus subtilis (strain 168) protein is Putative sulfur carrier protein YrkF (yrkF).